The following is a 491-amino-acid chain: Probable glycine dehydrogenase (decarboxylating) subunit 2 (491 aa).

K273 bears the N6-(pyridoxal phosphate)lysine mark.

The protein belongs to the GcvP family. C-terminal subunit subfamily. In terms of assembly, the glycine cleavage system is composed of four proteins: P, T, L and H. In this organism, the P 'protein' is a heterodimer of two subunits. It depends on pyridoxal 5'-phosphate as a cofactor.

The catalysed reaction is N(6)-[(R)-lipoyl]-L-lysyl-[glycine-cleavage complex H protein] + glycine + H(+) = N(6)-[(R)-S(8)-aminomethyldihydrolipoyl]-L-lysyl-[glycine-cleavage complex H protein] + CO2. Functionally, the glycine cleavage system catalyzes the degradation of glycine. The P protein binds the alpha-amino group of glycine through its pyridoxal phosphate cofactor; CO(2) is released and the remaining methylamine moiety is then transferred to the lipoamide cofactor of the H protein. The protein is Probable glycine dehydrogenase (decarboxylating) subunit 2 of Bacillus cytotoxicus (strain DSM 22905 / CIP 110041 / 391-98 / NVH 391-98).